The chain runs to 310 residues: Aspartate carbamoyltransferase catalytic subunit (310 aa).

Positions 60 and 61 each coordinate carbamoyl phosphate. Lys88 serves as a coordination point for L-aspartate. Carbamoyl phosphate is bound by residues Arg110, His138, and Gln141. 2 residues coordinate L-aspartate: Arg171 and Arg225. Residues Gly266 and Pro267 each contribute to the carbamoyl phosphate site.

This sequence belongs to the aspartate/ornithine carbamoyltransferase superfamily. ATCase family. Heterododecamer (2C3:3R2) of six catalytic PyrB chains organized as two trimers (C3), and six regulatory PyrI chains organized as three dimers (R2).

It carries out the reaction carbamoyl phosphate + L-aspartate = N-carbamoyl-L-aspartate + phosphate + H(+). The protein operates within pyrimidine metabolism; UMP biosynthesis via de novo pathway; (S)-dihydroorotate from bicarbonate: step 2/3. Functionally, catalyzes the condensation of carbamoyl phosphate and aspartate to form carbamoyl aspartate and inorganic phosphate, the committed step in the de novo pyrimidine nucleotide biosynthesis pathway. This is Aspartate carbamoyltransferase catalytic subunit from Christiangramia forsetii (strain DSM 17595 / CGMCC 1.15422 / KT0803) (Gramella forsetii).